Here is a 149-residue protein sequence, read N- to C-terminus: Pleckstrin homology domain-containing family J member 1 (149 aa).

The PH domain maps to 15-108 (RAEKAAELGM…WVEALTNASY (94 aa)).

This chain is Pleckstrin homology domain-containing family J member 1 (plekhj1), found in Xenopus laevis (African clawed frog).